Consider the following 208-residue polypeptide: Uracil phosphoribosyltransferase (208 aa).

Residues arginine 78, arginine 103, and 130–138 each bind 5-phospho-alpha-D-ribose 1-diphosphate; that span reads DPMLATGGS. Residues isoleucine 193 and 198-200 each bind uracil; that span reads GDA. 5-phospho-alpha-D-ribose 1-diphosphate is bound at residue aspartate 199.

This sequence belongs to the UPRTase family. Mg(2+) is required as a cofactor.

It catalyses the reaction UMP + diphosphate = 5-phospho-alpha-D-ribose 1-diphosphate + uracil. It functions in the pathway pyrimidine metabolism; UMP biosynthesis via salvage pathway; UMP from uracil: step 1/1. With respect to regulation, allosterically activated by GTP. In terms of biological role, catalyzes the conversion of uracil and 5-phospho-alpha-D-ribose 1-diphosphate (PRPP) to UMP and diphosphate. The sequence is that of Uracil phosphoribosyltransferase from Roseiflexus sp. (strain RS-1).